A 265-amino-acid chain; its full sequence is 4-hydroxy-tetrahydrodipicolinate reductase (265 aa).

Residues 7 to 12 (GASGRM) and D33 contribute to the NAD(+) site. R34 lines the NADP(+) pocket. Residues 96 to 98 (GTT) and 120 to 123 (AANM) contribute to the NAD(+) site. The active-site Proton donor/acceptor is the H153. H154 lines the (S)-2,3,4,5-tetrahydrodipicolinate pocket. The active-site Proton donor is the K157. Residue 163–164 (GT) coordinates (S)-2,3,4,5-tetrahydrodipicolinate.

This sequence belongs to the DapB family.

Its subcellular location is the cytoplasm. It carries out the reaction (S)-2,3,4,5-tetrahydrodipicolinate + NAD(+) + H2O = (2S,4S)-4-hydroxy-2,3,4,5-tetrahydrodipicolinate + NADH + H(+). The catalysed reaction is (S)-2,3,4,5-tetrahydrodipicolinate + NADP(+) + H2O = (2S,4S)-4-hydroxy-2,3,4,5-tetrahydrodipicolinate + NADPH + H(+). Its pathway is amino-acid biosynthesis; L-lysine biosynthesis via DAP pathway; (S)-tetrahydrodipicolinate from L-aspartate: step 4/4. Functionally, catalyzes the conversion of 4-hydroxy-tetrahydrodipicolinate (HTPA) to tetrahydrodipicolinate. This chain is 4-hydroxy-tetrahydrodipicolinate reductase, found in Burkholderia cenocepacia (strain ATCC BAA-245 / DSM 16553 / LMG 16656 / NCTC 13227 / J2315 / CF5610) (Burkholderia cepacia (strain J2315)).